Here is a 259-residue protein sequence, read N- to C-terminus: Ubiquinone/menaquinone biosynthesis C-methyltransferase UbiE (259 aa).

S-adenosyl-L-methionine contacts are provided by residues threonine 82, aspartate 103, 131-132 (NA), and serine 148.

It belongs to the class I-like SAM-binding methyltransferase superfamily. MenG/UbiE family.

It catalyses the reaction a 2-demethylmenaquinol + S-adenosyl-L-methionine = a menaquinol + S-adenosyl-L-homocysteine + H(+). The enzyme catalyses a 2-methoxy-6-(all-trans-polyprenyl)benzene-1,4-diol + S-adenosyl-L-methionine = a 5-methoxy-2-methyl-3-(all-trans-polyprenyl)benzene-1,4-diol + S-adenosyl-L-homocysteine + H(+). Its pathway is quinol/quinone metabolism; menaquinone biosynthesis; menaquinol from 1,4-dihydroxy-2-naphthoate: step 2/2. It functions in the pathway cofactor biosynthesis; ubiquinone biosynthesis. Methyltransferase required for the conversion of demethylmenaquinol (DMKH2) to menaquinol (MKH2) and the conversion of 2-polyprenyl-6-methoxy-1,4-benzoquinol (DDMQH2) to 2-polyprenyl-3-methyl-6-methoxy-1,4-benzoquinol (DMQH2). This chain is Ubiquinone/menaquinone biosynthesis C-methyltransferase UbiE, found in Haemophilus ducreyi (strain 35000HP / ATCC 700724).